The chain runs to 204 residues: Large ribosomal subunit protein bL25 (204 aa).

This sequence belongs to the bacterial ribosomal protein bL25 family. CTC subfamily. In terms of assembly, part of the 50S ribosomal subunit; part of the 5S rRNA/L5/L18/L25 subcomplex. Contacts the 5S rRNA. Binds to the 5S rRNA independently of L5 and L18.

Its function is as follows. This is one of the proteins that binds to the 5S RNA in the ribosome where it forms part of the central protuberance. The polypeptide is Large ribosomal subunit protein bL25 (Wolbachia sp. subsp. Brugia malayi (strain TRS)).